We begin with the raw amino-acid sequence, 423 residues long: Ferrochelatase, mitochondrial (423 aa).

Residues 1 to 40 (MIRFCPSCFALKRTAPVLNHTSRLGNYFNNTFSKFSVNRM) constitute a mitochondrion transit peptide. Cysteine 200 is a binding site for [2Fe-2S] cluster. Aspartate 385 is an active-site residue. Cysteine 405, cysteine 408, and cysteine 413 together coordinate [2Fe-2S] cluster.

Belongs to the ferrochelatase family. As to quaternary structure, monomer. [2Fe-2S] cluster is required as a cofactor.

It is found in the mitochondrion inner membrane. Its subcellular location is the cytoplasm. The protein resides in the nucleus. It catalyses the reaction heme b + 2 H(+) = protoporphyrin IX + Fe(2+). It functions in the pathway porphyrin-containing compound metabolism; protoheme biosynthesis; protoheme from protoporphyrin-IX: step 1/1. Its function is as follows. Catalyzes the ferrous insertion into protoporphyrin IX. The chain is Ferrochelatase, mitochondrial (hem15) from Schizosaccharomyces pombe (strain 972 / ATCC 24843) (Fission yeast).